A 197-amino-acid chain; its full sequence is MSGPRPVVLSGPSGAGKSTLLKRLLQEHSGIFGFSVSHTTRNPRPGEENGKDYYFVTREVMQRDIAAGDFIEHAEFSGNLYGTSKVAVQAVQAMNRICVLDVDLQGVRNIKATDLRPIYISVQPPSLHVLEQRLRQRNTETEESLVKRLAAAQADMESSKEPGLFDVVIINDSLDQAYAELKEALSEEIKKAQRTGA.

Ser-2 carries the N-acetylserine modification. The Guanylate kinase-like domain maps to 4–186 (PRPVVLSGPS…AYAELKEALS (183 aa)). 14–19 (GAGKST) serves as a coordination point for ATP. 37–51 (SHTTRNPRPGEENGK) contributes to the substrate binding site. Active-site residues include Arg-44, Arg-137, and Arg-148. Arg-137 lines the ATP pocket. 171–172 (ND) contacts ATP.

Belongs to the guanylate kinase family. In terms of assembly, monomer. Interacts with RD3. As to expression, widely expressed.

Its subcellular location is the photoreceptor inner segment. The protein localises to the cytoplasm. It is found in the cytosol. The protein resides in the mitochondrion. The catalysed reaction is GMP + ATP = GDP + ADP. With respect to regulation, up-regulated by RD3. Its function is as follows. Catalyzes the phosphorylation of GMP to GDP. Essential enzyme for recycling GMP and indirectly, cyclic GMP (cGMP). Involved in the cGMP metabolism in photoreceptors. It may also have a role in the survival and growth progression of some tumors. In addition to its physiological role, GUK1 is essential for converting prodrugs used for the treatment of cancers and viral infections into their pharmacologically active metabolites, most notably acyclovir, ganciclovir, and 6-thioguanine and its closely related analog 6-mercaptopurine. This is Guanylate kinase from Homo sapiens (Human).